We begin with the raw amino-acid sequence, 552 residues long: Alcohol dehydrogenase [acceptor] (552 aa).

3–32 contributes to the FAD binding site; it reads DYIIVGAGSAGCVLANRLSADPSKRVCLLE. His-469 (proton acceptor) is an active-site residue.

The protein belongs to the GMC oxidoreductase family. Requires FAD as cofactor.

It is found in the cell inner membrane. It carries out the reaction a primary alcohol + A = an aldehyde + AH2. Converts aliphatic medium-chain-length alcohols into aldehydes. May be linked to the electron transfer chain. This chain is Alcohol dehydrogenase [acceptor] (alkJ), found in Pseudomonas putida (Arthrobacter siderocapsulatus).